Consider the following 355-residue polypeptide: Peptide chain release factor 1 (355 aa).

An N5-methylglutamine modification is found at Gln231. Over residues 281-291 (ERLAKESEARK) the composition is skewed to basic and acidic residues. The segment at 281 to 302 (ERLAKESEARKSQVGSGDRSER) is disordered.

This sequence belongs to the prokaryotic/mitochondrial release factor family. In terms of processing, methylated by PrmC. Methylation increases the termination efficiency of RF1.

The protein resides in the cytoplasm. In terms of biological role, peptide chain release factor 1 directs the termination of translation in response to the peptide chain termination codons UAG and UAA. The chain is Peptide chain release factor 1 from Campylobacter jejuni subsp. doylei (strain ATCC BAA-1458 / RM4099 / 269.97).